Here is a 120-residue protein sequence, read N- to C-terminus: Small ribosomal subunit protein uS12c (120 aa).

Belongs to the universal ribosomal protein uS12 family. Part of the 30S ribosomal subunit.

It localises to the plastid. It is found in the apicoplast. With S4 and S5 plays an important role in translational accuracy. Located at the interface of the 30S and 50S subunits. This is Small ribosomal subunit protein uS12c (rps12) from Eimeria tenella (Coccidian parasite).